The primary structure comprises 379 residues: Glucose-1-phosphate adenylyltransferase (379 aa).

Residues G164, 179 to 180 (EK), and S190 each bind alpha-D-glucose 1-phosphate.

It belongs to the bacterial/plant glucose-1-phosphate adenylyltransferase family. Homotetramer.

It carries out the reaction alpha-D-glucose 1-phosphate + ATP + H(+) = ADP-alpha-D-glucose + diphosphate. Its pathway is glycan biosynthesis; glycogen biosynthesis. Functionally, involved in the biosynthesis of ADP-glucose, a building block required for the elongation reactions to produce glycogen. Catalyzes the reaction between ATP and alpha-D-glucose 1-phosphate (G1P) to produce pyrophosphate and ADP-Glc. The sequence is that of Glucose-1-phosphate adenylyltransferase from Streptococcus agalactiae serotype Ia (strain ATCC 27591 / A909 / CDC SS700).